The chain runs to 396 residues: Argininosuccinate synthase (396 aa).

Position 9-17 (9-17) interacts with ATP; that stretch reads AYSGGLDTS. Tyrosine 85 lines the L-citrulline pocket. Glycine 115 contacts ATP. Residues threonine 117, asparagine 121, and aspartate 122 each contribute to the L-aspartate site. L-citrulline is bound at residue asparagine 121. Arginine 125, serine 173, glutamate 258, and tyrosine 270 together coordinate L-citrulline.

It belongs to the argininosuccinate synthase family. Type 1 subfamily. In terms of assembly, homotetramer.

The protein localises to the cytoplasm. It catalyses the reaction L-citrulline + L-aspartate + ATP = 2-(N(omega)-L-arginino)succinate + AMP + diphosphate + H(+). It functions in the pathway amino-acid biosynthesis; L-arginine biosynthesis; L-arginine from L-ornithine and carbamoyl phosphate: step 2/3. The polypeptide is Argininosuccinate synthase (Streptococcus agalactiae serotype V (strain ATCC BAA-611 / 2603 V/R)).